A 144-amino-acid polypeptide reads, in one-letter code: uncharacterized protein (144 aa).

Residues 124 to 133 (KALNRKKSKT) show a composition bias toward basic residues. The disordered stretch occupies residues 124–144 (KALNRKKSKTKNGEKNGEGKS). Positions 134–144 (KNGEKNGEGKS) are enriched in basic and acidic residues.

This is an uncharacterized protein from Acidianus filamentous virus 1 (isolate United States/Yellowstone) (AFV-1).